A 183-amino-acid polypeptide reads, in one-letter code: Macro domain-containing protein (183 aa).

Residues 1 to 174 (MKKVHLIQAD…IYKNILSNID (174 aa)) enclose the Macro domain.

This sequence belongs to the MacroD-type family.

In Acinetobacter sp. (strain ED45-25), this protein is Macro domain-containing protein.